The sequence spans 209 residues: Pyridoxine/pyridoxamine 5'-phosphate oxidase (209 aa).

Residues 57–62 (RMVLLK), 72–73 (YT), Lys-79, and Gln-101 each bind FMN. Position 62 (Lys-62) interacts with substrate. Substrate contacts are provided by Tyr-119, Arg-123, and Ser-127. FMN contacts are provided by residues 136 to 137 (QS) and Trp-181. 187 to 189 (RLH) contributes to the substrate binding site. Arg-191 contributes to the FMN binding site.

This sequence belongs to the pyridoxamine 5'-phosphate oxidase family. Homodimer. It depends on FMN as a cofactor.

The enzyme catalyses pyridoxamine 5'-phosphate + O2 + H2O = pyridoxal 5'-phosphate + H2O2 + NH4(+). It carries out the reaction pyridoxine 5'-phosphate + O2 = pyridoxal 5'-phosphate + H2O2. The protein operates within cofactor metabolism; pyridoxal 5'-phosphate salvage; pyridoxal 5'-phosphate from pyridoxamine 5'-phosphate: step 1/1. Its pathway is cofactor metabolism; pyridoxal 5'-phosphate salvage; pyridoxal 5'-phosphate from pyridoxine 5'-phosphate: step 1/1. Functionally, catalyzes the oxidation of either pyridoxine 5'-phosphate (PNP) or pyridoxamine 5'-phosphate (PMP) into pyridoxal 5'-phosphate (PLP). The polypeptide is Pyridoxine/pyridoxamine 5'-phosphate oxidase (Chelativorans sp. (strain BNC1)).